The chain runs to 582 residues: ATP-dependent lipid A-core flippase (582 aa).

A run of 5 helical transmembrane segments spans residues 25–45, 69–89, 137–159, 253–273, and 275–295; these read AGLIVAAIALILNAASDTFML, LAVIGLMVVRGVTGFVSSYCI, ASSSSALVTVVREGASIIGLFIM, PIIQLIASFALALVLYAASFP, and VMETLTAGTITVVFSAMIALM. The ABC transmembrane type-1 domain maps to 28-310; the sequence is IVAAIALILN…LTNVNTQFQR (283 aa). The region spanning 342 to 578 is the ABC transporter domain; sequence IEFRHVTFYY…QGVYAQLNRM (237 aa). 376–383 contacts ATP; sequence GRSGSGKS.

This sequence belongs to the ABC transporter superfamily. Lipid exporter (TC 3.A.1.106) family. Homodimer.

The protein localises to the cell inner membrane. It carries out the reaction ATP + H2O + lipid A-core oligosaccharideSide 1 = ADP + phosphate + lipid A-core oligosaccharideSide 2.. In terms of biological role, involved in lipopolysaccharide (LPS) biosynthesis. Translocates lipid A-core from the inner to the outer leaflet of the inner membrane. Transmembrane domains (TMD) form a pore in the inner membrane and the ATP-binding domain (NBD) is responsible for energy generation. This is ATP-dependent lipid A-core flippase from Yersinia pestis bv. Antiqua (strain Antiqua).